The chain runs to 392 residues: Probable tRNA sulfurtransferase (392 aa).

Residues 63–169 form the THUMP domain; that stretch reads GRAADAAADT…DAEAFVFLTH (107 aa). ATP-binding positions include 187-188, Arg270, Gly292, and Gln301; that span reads LV.

It belongs to the ThiI family.

Its subcellular location is the cytoplasm. The enzyme catalyses [ThiI sulfur-carrier protein]-S-sulfanyl-L-cysteine + a uridine in tRNA + 2 reduced [2Fe-2S]-[ferredoxin] + ATP + H(+) = [ThiI sulfur-carrier protein]-L-cysteine + a 4-thiouridine in tRNA + 2 oxidized [2Fe-2S]-[ferredoxin] + AMP + diphosphate. The catalysed reaction is [ThiS sulfur-carrier protein]-C-terminal Gly-Gly-AMP + S-sulfanyl-L-cysteinyl-[cysteine desulfurase] + AH2 = [ThiS sulfur-carrier protein]-C-terminal-Gly-aminoethanethioate + L-cysteinyl-[cysteine desulfurase] + A + AMP + 2 H(+). Its pathway is cofactor biosynthesis; thiamine diphosphate biosynthesis. In terms of biological role, catalyzes the ATP-dependent transfer of a sulfur to tRNA to produce 4-thiouridine in position 8 of tRNAs, which functions as a near-UV photosensor. Also catalyzes the transfer of sulfur to the sulfur carrier protein ThiS, forming ThiS-thiocarboxylate. This is a step in the synthesis of thiazole, in the thiamine biosynthesis pathway. The sulfur is donated as persulfide by IscS. This chain is Probable tRNA sulfurtransferase, found in Halobacterium salinarum (strain ATCC 29341 / DSM 671 / R1).